A 110-amino-acid polypeptide reads, in one-letter code: Chloride intracellular channel protein 1 (110 aa).

Alanine 2 bears the N-acetylalanine mark. A required for insertion into the membrane region spans residues 2-90; the sequence is AEEQPQVELF…EEFLEAVLCP (89 aa). Position 13 is an N6-acetyllysine (lysine 13). The G-site motif lies at 24-27; it reads CPFS. Cysteines 24 and 59 form a disulfide. Residues 26-46 form a helical membrane-spanning segment; the sequence is FSQRLFMVLWLKGVTFNVTTV.

It belongs to the chloride channel CLIC family. In terms of assembly, monomer. Homodimer (in vitro). Interacts with TRAPPC2. Dimerization requires a conformation change that leads to the exposure of a large hydrophobic surface. In vivo, this may lead to membrane insertion.

It is found in the nucleus. The protein localises to the nucleus membrane. It localises to the cytoplasm. Its subcellular location is the cell membrane. The protein resides in the endoplasmic reticulum. It carries out the reaction L-dehydroascorbate + 2 glutathione = glutathione disulfide + L-ascorbate. It catalyses the reaction chloride(in) = chloride(out). The catalysed reaction is iodide(out) = iodide(in). The enzyme catalyses thiocyanate(in) = thiocyanate(out). It carries out the reaction nitrate(in) = nitrate(out). It catalyses the reaction bromide(in) = bromide(out). The catalysed reaction is fluoride(in) = fluoride(out). In the soluble state, catalyzes glutaredoxin-like thiol disulfide exchange reactions with reduced glutathione as electron donor. Reduces selenite and dehydroascorbate and may act as an antioxidant during oxidative stress response. Can insert into membranes and form voltage-dependent multi-ion conductive channels. Membrane insertion seems to be redox-regulated and may occur only under oxidizing conditions. Involved in regulation of the cell cycle. In Sus scrofa (Pig), this protein is Chloride intracellular channel protein 1 (CLIC1).